The sequence spans 245 residues: Alpha carbonic anhydrase 2 (245 aa).

The first 23 residues, 1 to 23, serve as a signal peptide directing secretion; sequence MDKISIRCFIFLVLTSFVTTVSC. Residues 37–245 enclose the Alpha-carbonic anhydrase domain; the sequence is HEFSYEWNQE…THRYFLLFFT (209 aa). The cysteines at positions 62 and 222 are disulfide-linked. Residue Asn-95 is glycosylated (N-linked (GlcNAc...) asparagine). The active-site Proton acceptor is His-103. Asn-120 carries N-linked (GlcNAc...) asparagine glycosylation. The Zn(2+) site is built by His-130, His-132, and His-149. Asn-156 is a glycosylation site (N-linked (GlcNAc...) asparagine). 218-219 lines the substrate pocket; that stretch reads TT.

Belongs to the alpha-class carbonic anhydrase family. Requires Zn(2+) as cofactor. In terms of processing, N-glycosylated. Expressed in stems and roots.

The protein resides in the plastid. Its subcellular location is the chloroplast stroma. It carries out the reaction hydrogencarbonate + H(+) = CO2 + H2O. In terms of biological role, reversible hydration of carbon dioxide. This chain is Alpha carbonic anhydrase 2 (ACA2), found in Arabidopsis thaliana (Mouse-ear cress).